The sequence spans 293 residues: Porphobilinogen deaminase (293 aa).

At Cys-235 the chain carries S-(dipyrrolylmethanemethyl)cysteine.

This sequence belongs to the HMBS family. Monomer. It depends on dipyrromethane as a cofactor.

The catalysed reaction is 4 porphobilinogen + H2O = hydroxymethylbilane + 4 NH4(+). It functions in the pathway porphyrin-containing compound metabolism; protoporphyrin-IX biosynthesis; coproporphyrinogen-III from 5-aminolevulinate: step 2/4. In terms of biological role, tetrapolymerization of the monopyrrole PBG into the hydroxymethylbilane pre-uroporphyrinogen in several discrete steps. The protein is Porphobilinogen deaminase of Ruminiclostridium cellulolyticum (strain ATCC 35319 / DSM 5812 / JCM 6584 / H10) (Clostridium cellulolyticum).